The chain runs to 384 residues: Glucose-1-phosphate adenylyltransferase (384 aa).

Alpha-D-glucose 1-phosphate is bound by residues tyrosine 103, glycine 168, 183–184 (EK), and serine 194.

It belongs to the bacterial/plant glucose-1-phosphate adenylyltransferase family. As to quaternary structure, homotetramer.

It carries out the reaction alpha-D-glucose 1-phosphate + ATP + H(+) = ADP-alpha-D-glucose + diphosphate. It functions in the pathway glycan biosynthesis; glycogen biosynthesis. Its function is as follows. Involved in the biosynthesis of ADP-glucose, a building block required for the elongation reactions to produce glycogen. Catalyzes the reaction between ATP and alpha-D-glucose 1-phosphate (G1P) to produce pyrophosphate and ADP-Glc. The sequence is that of Glucose-1-phosphate adenylyltransferase from Fusobacterium nucleatum subsp. nucleatum (strain ATCC 25586 / DSM 15643 / BCRC 10681 / CIP 101130 / JCM 8532 / KCTC 2640 / LMG 13131 / VPI 4355).